Reading from the N-terminus, the 89-residue chain is MNAVITVVGKDKVGIIHGVSGILNENNVNILNISQTIMDGYFTMIMLTDISNSTKDISSLKEIFKEFSLKNSLDISVQHEDIFNSMHRI.

Residues 4-84 (VITVVGKDKV…ISVQHEDIFN (81 aa)) form the ACT domain.

The protein belongs to the UPF0237 family.

This chain is UPF0237 protein CPE1496, found in Clostridium perfringens (strain 13 / Type A).